The chain runs to 467 residues: MVITEMTPRNTIAAIATAIVPQQGSVGIVRMSGSEAMKIAQTLFHAPGKQVWETHHILYGYIRHPHTGQLVDETLLLIMKAPRSYTREDVVEFHCHGGIIAIQQVLQLCIEAGAELAQPGEFTLRAFLNGRLDLTQAESIAELVGSQSPAAAQVALAGLQGKLASPIRHLRACCLDILAEIEARIDFEEDLPPLDESEISQKLDDILVDLSMVLATASRGELLRTGLKVAIIGRPNVGKSSLLNAWSHSDRAIVTDLPGTTRDVVESQLVVGGIPVQVLDTAGIRETEDRVEKIGVERSCQAAESADIVLLTIDAQVGWTELDEVIYQQVKHRFLILIINKVDQVDLVHSELIRSIFYPETIKNVVATAAINNQGIEELEAAILNAVNLDNVQPENLDFAVNQRQAAALTRAKIALEQCLNTIKNNLPLDFWTIDLRGSIYALGEVTGEDVTESVLDIIFSRFCIGK.

The (6S)-5-formyl-5,6,7,8-tetrahydrofolate site is built by R30, E92, and R131. The region spanning 226-388 (GLKVAIIGRP…LEAAILNAVN (163 aa)) is the TrmE-type G domain. N236 is a K(+) binding site. GTP-binding positions include 236-241 (NVGKSS), 255-261 (TDLPGTT), and 280-283 (DTAG). S240 contributes to the Mg(2+) binding site. Residues T255, L257, and T260 each coordinate K(+). T261 serves as a coordination point for Mg(2+). K467 serves as a coordination point for (6S)-5-formyl-5,6,7,8-tetrahydrofolate.

Belongs to the TRAFAC class TrmE-Era-EngA-EngB-Septin-like GTPase superfamily. TrmE GTPase family. Homodimer. Heterotetramer of two MnmE and two MnmG subunits. It depends on K(+) as a cofactor.

It is found in the cytoplasm. Its function is as follows. Exhibits a very high intrinsic GTPase hydrolysis rate. Involved in the addition of a carboxymethylaminomethyl (cmnm) group at the wobble position (U34) of certain tRNAs, forming tRNA-cmnm(5)s(2)U34. This is tRNA modification GTPase MnmE from Trichodesmium erythraeum (strain IMS101).